A 276-amino-acid chain; its full sequence is Glutamate racemase (276 aa).

Residues 10–11 (DS) and 42–43 (YG) contribute to the substrate site. Cys-74 functions as the Proton donor/acceptor in the catalytic mechanism. Residue 75-76 (NT) participates in substrate binding. Cys-185 serves as the catalytic Proton donor/acceptor. Residue 186–187 (TH) coordinates substrate.

This sequence belongs to the aspartate/glutamate racemases family.

It carries out the reaction L-glutamate = D-glutamate. It participates in cell wall biogenesis; peptidoglycan biosynthesis. In terms of biological role, provides the (R)-glutamate required for cell wall biosynthesis. The chain is Glutamate racemase from Levilactobacillus brevis (Lactobacillus brevis).